The primary structure comprises 412 residues: NF-kappa-B essential modulator (412 aa).

The segment at 1-48 (MNKHPWKNQLSEMVQPSGGPAEDQDMLGEESSLGKPAMLHLPSEQGTP) is disordered. The tract at residues 1-197 (MNKHPWKNQL…REVLQQQHSV (197 aa)) is required for interaction with and ubiquitination by MARCHF2. 2 positions are modified to phosphoserine; by IKKB: S31 and S43. The tract at residues 44–111 (EQGTPETLQR…KLVERLSLEK (68 aa)) is interaction with CHUK/IKBKB. Residues 49–345 (ETLQRCLEEN…LKVGCHESAR (297 aa)) are a coiled coil. Position 68 is a phosphoserine (S68). Phosphoserine; by ATM is present on S85. Residues K111, K139, K143, K226, and K246 each participate in a glycyl lysine isopeptide (Lys-Gly) (interchain with G-Cter in ubiquitin) cross-link. An interaction with TANK region spans residues 150–250 (LGELQESQSR…YDSHIKSSKG (101 aa)). The interval 242–343 (DSHIKSSKGM…NKLKVGCHES (102 aa)) is ubiquitin-binding (UBAN). The self-association stretch occupies residues 246 to 358 (KSSKGMQLED…MRKRHVETPQ (113 aa)). A required for interaction with TNFAIP3 region spans residues 249 to 412 (KGMQLEDLRQ…LQIHVMECIE (164 aa)). Residues 250-339 (GMQLEDLRQQ…QREFNKLKVG (90 aa)) are linear polyubiquitin-binding, does not bind to 'Lys-63'-linked polyubiquitin. A Glycyl lysine isopeptide (Lys-Gly) (interchain with G-Cter in SUMO); alternate cross-link involves residue K270. K270 is covalently cross-linked (Glycyl lysine isopeptide (Lys-Gly) (interchain with G-Cter in ubiquitin); alternate). Glycyl lysine isopeptide (Lys-Gly) (interchain with G-Cter in ubiquitin) cross-links involve residues K276, K278, K285, and K295. K302 participates in a covalent cross-link: Glycyl lysine isopeptide (Lys-Gly) (interchain with G-Cter in SUMO); alternate. K302 participates in a covalent cross-link: Glycyl lysine isopeptide (Lys-Gly) (interchain with G-Cter in ubiquitin); alternate. Glycyl lysine isopeptide (Lys-Gly) (interchain with G-Cter in ubiquitin) cross-links involve residues K314, K318, and K319. The interval 315–336 (LVEKKEYLQEQLEQLQREFNKL) is leucine-zipper. At S369 the chain carries Phosphoserine; by IKKB. The tract at residues 375–412 (SNQRRSPPEEPPDFCCPKCQYQAPDMDTLQIHVMECIE) is interaction with CYLD. S380 is subject to Phosphoserine. Residues 382-412 (PEEPPDFCCPKCQYQAPDMDTLQIHVMECIE) form a CCHC NOA-type zinc finger. C390 contacts Zn(2+). A Glycyl lysine isopeptide (Lys-Gly) (interchain with G-Cter in ubiquitin) cross-link involves residue K392. Zn(2+) is bound by residues C393, H406, and C410.

As to quaternary structure, homodimer; disulfide-linked. Component of the I-kappa-B-kinase (IKK) core complex consisting of CHUK, IKBKB and IKBKG; probably four alpha/CHUK-beta/IKBKB dimers are associated with four gamma/IKBKG subunits. The IKK core complex seems to associate with regulatory or adapter proteins to form a IKK-signalosome holo-complex. The IKK complex associates with TERF2IP/RAP1, leading to promote IKK-mediated phosphorylation of RELA/p65. Part of a complex composed of NCOA2, NCOA3, CHUK/IKKA, IKBKB, IKBKG and CREBBP. Interacts with COPS3, CYLD, NALP2, TRPC4AP and PIDD1. Interacts with ATM; the complex is exported from the nucleus. Interacts with TRAF6. Interacts with IKBKE. Interacts with TANK; the interaction is enhanced by IKBKE and TBK1. Part of a ternary complex consisting of TANK, IKBKB and IKBKG. Interacts with ZFAND5. Interacts with RIPK2. Interacts with TNIP1 and TNFAIP3; TNIP1 facilitates the TNFAIP3-mediated de-ubiquitination of IKBKG. Interacts with TNFAIP3; the interaction is induced by TNF stimulation and by polyubiquitin. Binds (via UBAN region) polyubiquitin; binds both 'Lys-63'-linked and linear polyubiquitin, with higher affinity for linear ubiquitin. Interacts with NLRP10. Interacts with TANK; this interaction increases in response to DNA damage. Interacts with USP10; this interaction increases in response to DNA damage. Interacts with ZC3H12A; this interaction increases in response to DNA damage. Interacts with IFIT5; the interaction synergizes the recruitment of IKK to MAP3K7 and enhances IKK phosphorylation. Interacts with TRIM29; this interaction induces IKBKG/NEMO ubiquitination and proteolytic degradation. Interacts with TRIM13; this interaction leads to IKBKG/NEMO ubiquitination. Interacts with ARFIP2. Interacts with RIPK1. Interacts with (ubiquitinated) BCL10; interaction with polyubiquitinated BCL10 via both 'Lys-63'-linked and linear ubiquitin is required for TCR-induced NF-kappa-B activation. Interacts with MARCHF2; during the late stages of macrophage viral and bacterial infection; the interaction leads to ubiquitination and degradation of IKBKG/NEMO. Phosphorylation at Ser-68 attenuates aminoterminal homodimerization. Post-translationally, polyubiquitinated on Lys-278 via 'Lys-63'-linked ubiquitin; the ubiquitination is mediated downstream of NOD2 and RIPK2 and probably plays a role in signaling by facilitating interactions with ubiquitin domain-containing proteins and activates the NF-kappa-B pathway. Polyubiquitinated on Lys-278 and Lys-302 through 'Lys-63'-linked ubiquitin; the ubiquitination is mediated by BCL10, MALT1 and TRAF6 and probably plays a role in signaling by facilitating interactions with ubiquitin domain-containing proteins and activates the NF-kappa-B pathway. Monoubiquitinated on Lys-270 and Lys-302; promotes nuclear export. Polyubiquitinated through 'Lys-27' by TRIM23; involved in antiviral innate and inflammatory responses. Linear polyubiquitinated on Lys-111, Lys-143, Lys-226, Lys-246, Lys-270, Lys-278, Lys-285, Lys-295, Lys-302 and Lys-319; the head-to-tail polyubiquitination is mediated by the LUBAC complex and plays a key role in NF-kappa-B activation. Deubiquitinated by USP10 in a TANK-dependent and -independent manner, leading to the negative regulation of NF-kappa-B signaling upon DNA damage. Ubiquitinated at Lys-319 by MARCHF2 following bacterial and viral infection which leads to its degradation. Polyubiquitinated via 'Lys-29'-linked ubiquitin; leading to lysosomal degradation. In terms of processing, sumoylated on Lys-270 and Lys-302 with SUMO1; the modification results in phosphorylation of Ser-85 by ATM leading to a replacement of the sumoylation by mono-ubiquitination on these residues. Neddylated by TRIM40, resulting in stabilization of NFKBIA and down-regulation of NF-kappa-B activity.

The protein resides in the cytoplasm. It is found in the nucleus. Regulatory subunit of the IKK core complex which phosphorylates inhibitors of NF-kappa-B thus leading to the dissociation of the inhibitor/NF-kappa-B complex and ultimately the degradation of the inhibitor. Its binding to scaffolding polyubiquitin plays a key role in IKK activation by multiple signaling receptor pathways. Can recognize and bind both 'Lys-63'-linked and linear polyubiquitin upon cell stimulation, with a much highr affinity for linear polyubiquitin. Could be implicated in NF-kappa-B-mediated protection from cytokine toxicity. Essential for viral activation of IRF3. Involved in TLR3- and IFIH1-mediated antiviral innate response; this function requires 'Lys-27'-linked polyubiquitination. This is NF-kappa-B essential modulator (Ikbkg) from Mus musculus (Mouse).